Here is a 247-residue protein sequence, read N- to C-terminus: Mannose-P-dolichol utilization defect 1 protein (247 aa).

The residue at position 2 (A2) is an N-acetylalanine. 7 helical membrane-spanning segments follow: residues 37 to 57, 74 to 94, 100 to 120, 128 to 145, 151 to 171, 185 to 205, and 213 to 233; these read CLKI…SLLV, LSLQ…VYSI, FSSW…CFLV, VKGV…LALL, LAVV…GKLL, LSAI…FTSV, and MAGV…QVLF. The 67-residue stretch at 39 to 105 folds into the PQ-loop 1 domain; it reads KILLSKGLGL…NNFPFSSWGE (67 aa). The 58-residue stretch at 159-216 folds into the PQ-loop 2 domain; that stretch reads ASNVPAVVVGKLLQAATNYRNGHTGQLSAITVFMLFGGSLARIFTSVQETGDPLMAGV.

This sequence belongs to the MPDU1 (TC 2.A.43.3) family.

The protein localises to the membrane. In terms of biological role, required for normal utilization of mannose-dolichol phosphate (Dol-P-Man) in the synthesis of N-linked and O-linked oligosaccharides and GPI anchors. This Mus musculus (Mouse) protein is Mannose-P-dolichol utilization defect 1 protein (Mpdu1).